The sequence spans 242 residues: N-acetylmuramate alpha-1-phosphate uridylyltransferase (242 aa).

Residues 16–18 and Lys28 each bind UTP; that span reads GTR. A substrate-binding site is contributed by Asn113. Position 115 (Asp115) interacts with Mg(2+). Residue Asp158 participates in substrate binding.

It belongs to the nucleotidyltransferase MurU family. In terms of assembly, monomer. It depends on Mg(2+) as a cofactor.

The enzyme catalyses N-acetyl-alpha-D-muramate 1-phosphate + UDP + H(+) = UDP-N-acetyl-alpha-D-muramate + phosphate. It participates in cell wall biogenesis; peptidoglycan recycling. Its function is as follows. Catalyzes the formation of UDP-N-acetylmuramate (UDP-MurNAc), a crucial precursor of the bacterial peptidoglycan cell wall, from UTP and MurNAc-alpha-1P. Is likely involved in peptidoglycan recycling as part of a cell wall recycling pathway that bypasses de novo biosynthesis of the peptidoglycan precursor UDP-MurNAc. Is able to complement the fosfomycin sensitivity phenotype of a P.putida mutant lacking murU. This Caulobacter vibrioides (strain ATCC 19089 / CIP 103742 / CB 15) (Caulobacter crescentus) protein is N-acetylmuramate alpha-1-phosphate uridylyltransferase.